A 352-amino-acid polypeptide reads, in one-letter code: Bifunctional protein FolD 1, mitochondrial (352 aa).

The N-terminal 23 residues, 1–23 (MLMIARKALASAHTKAFRLATRD), are a transit peptide targeting the mitochondrion.

This sequence belongs to the tetrahydrofolate dehydrogenase/cyclohydrolase family. Homodimer.

It localises to the mitochondrion. The catalysed reaction is (6R)-5,10-methylene-5,6,7,8-tetrahydrofolate + NADP(+) = (6R)-5,10-methenyltetrahydrofolate + NADPH. It carries out the reaction (6R)-5,10-methenyltetrahydrofolate + H2O = (6R)-10-formyltetrahydrofolate + H(+). The protein operates within one-carbon metabolism; tetrahydrofolate interconversion. Catalyzes the oxidation of 5,10-methylenetetrahydrofolate to 5,10-methenyltetrahydrofolate and then the hydrolysis of 5,10-methenyltetrahydrofolate to 10-formyltetrahydrofolate. The protein is Bifunctional protein FolD 1, mitochondrial (FOLD1) of Arabidopsis thaliana (Mouse-ear cress).